The chain runs to 763 residues: Cyclin-F (763 aa).

A Nuclear localization signal 1 motif is present at residues 19–27; it reads KRRVKRRPR. In terms of domain architecture, F-box spans 28–75; sequence VLTLLSLPEDVLLYVLECLPAVDILSMREVHPHLRSLVDSHSSVWARA. The Cyclin N-terminal domain occupies 299-411; that stretch reads INKTSIFTTQ…EIISALEGKI (113 aa). Short sequence motifs (d box) lie at residues 316-319 and 355-358; these read RYIL and RAKL. Disordered regions lie at residues 574–600 and 677–763; these read GSKT…TAEL and KLEN…SDEL. A Nuclear localization signal 2 motif is present at residues 575–581; sequence SKTKRRR. A compositionally biased stretch (basic and acidic residues) spans 580-590; that stretch reads RREDSIQEDRG. The tract at residues 589-747 is PEST; it reads RGSFVTTPTA…LFKASRRQVK (159 aa). A compositionally biased stretch (low complexity) spans 692 to 710; it reads SSGYSSVSSGGSPTSSSSP. Positions 741–751 are enriched in basic residues; sequence ASRRQVKRKNQ.

The protein belongs to the cyclin family. Cyclin AB subfamily. In terms of assembly, component of the SCF(CCNF) complex.

The protein localises to the nucleus. It localises to the cytoplasm. Its subcellular location is the perinuclear region. The protein resides in the cytoskeleton. It is found in the microtubule organizing center. The protein localises to the centrosome. It localises to the centriole. Functionally, substrate recognition component of the SCF(CCNF) E3 ubiquitin-protein ligase complex which mediates the ubiquitination and subsequent proteasomal degradation of target proteins. The SCF(CCNF) E3 ubiquitin-protein ligase complex is an integral component of the ubiquitin proteasome system (UPS) and links proteasome degradation to the cell cycle. Mediates the substrate recognition and the proteasomal degradation of various target proteins during G2 phase involved in the regulation of cell cycle progression and in the maintenance of genome stability. This is Cyclin-F (ccnf) from Xenopus tropicalis (Western clawed frog).